A 176-amino-acid chain; its full sequence is NRGPAYGLSAEVKNKLAQKYDPQTERQLRVWIEGATGRRIGDNFXDGLKDGVILMELINKLQPGSVQKVNDPVQNWHKLENIGNFLRAIKHYGVKPHDIFEANDLFENTNHTQVQSTLIALASQAKTKGNNVGLGVKYAEKQQRRFQPEKLREGRNIIGLQMGTNKFASQQGMTAY.

The region spanning 22-125 is the Calponin-homology (CH) domain; it reads PQTERQLRVW…STLIALASQA (104 aa). One copy of the Calponin-like repeat lies at 158–176; sequence IGLQMGTNKFASQQGMTAY. T164 is subject to Phosphothreonine; by ROCK2. S169 is modified (phosphoserine; by ROCK2). T174 is modified (phosphothreonine; by ROCK2).

Belongs to the calponin family. In terms of tissue distribution, smooth muscle, and tissues containing significant amounts of smooth muscle.

Its function is as follows. Thin filament-associated protein that is implicated in the regulation and modulation of smooth muscle contraction. It is capable of binding to actin, calmodulin and tropomyosin. The interaction of calponin with actin inhibits the actomyosin Mg-ATPase activity. The protein is Calponin-1 (CNN1) of Meleagris gallopavo (Wild turkey).